The primary structure comprises 247 residues: Adenosylcobinamide-GDP ribazoletransferase (247 aa).

Helical transmembrane passes span 31-51 (ILFYPLVGLIIGGILFLVTCI), 55-75 (LPALLLAAIVLALWIWLTGGL), 109-129 (IGVLSLVIICLLKFALVYVLI), 135-155 (LFLICIPILGRVVPSILFLTT), 183-203 (VLLLPLYWGWQGLIAIIGFLI), and 227-247 (AIEIGETVLMFTFVVSYFYLV).

Belongs to the CobS family. Requires Mg(2+) as cofactor.

It localises to the cell inner membrane. The catalysed reaction is alpha-ribazole + adenosylcob(III)inamide-GDP = adenosylcob(III)alamin + GMP + H(+). It catalyses the reaction alpha-ribazole 5'-phosphate + adenosylcob(III)inamide-GDP = adenosylcob(III)alamin 5'-phosphate + GMP + H(+). The protein operates within cofactor biosynthesis; adenosylcobalamin biosynthesis; adenosylcobalamin from cob(II)yrinate a,c-diamide: step 7/7. Functionally, joins adenosylcobinamide-GDP and alpha-ribazole to generate adenosylcobalamin (Ado-cobalamin). Also synthesizes adenosylcobalamin 5'-phosphate from adenosylcobinamide-GDP and alpha-ribazole 5'-phosphate. The sequence is that of Adenosylcobinamide-GDP ribazoletransferase from Acinetobacter baumannii (strain ATCC 17978 / DSM 105126 / CIP 53.77 / LMG 1025 / NCDC KC755 / 5377).